We begin with the raw amino-acid sequence, 167 residues long: Endothelin-3 (167 aa).

The signal sequence occupies residues 1-19 (MELGLWLLLGLTVTSAAAA). Positions 20–50 (LPAQPGNAGQERGPGRSGDQEEKRVPAHHRP) are excised as a propeptide. Residues 22 to 45 (AQPGNAGQERGPGRSGDQEEKRVP) form a disordered region. 2 cysteine pairs are disulfide-bonded: cysteine 53/cysteine 67 and cysteine 55/cysteine 63. Residues 74–167 (INTPEQTVPY…KSRTDKVHQP (94 aa)) constitute a propeptide that is removed on maturation. The tract at residues 85–112 (LSNHRGSLRGKRSSGPVPESSQSSPQTR) is disordered. Low complexity predominate over residues 97-109 (SSGPVPESSQSSP). Residues 115–135 (CACSGVDDKACAYFCAHVTSY) form an endothelin-like region. Residues 140 to 149 (EKAAAEEKQE) show a composition bias toward basic and acidic residues. The segment at 140-167 (EKAAAEEKQETGGPRQRLKSRTDKVHQP) is disordered.

Belongs to the endothelin/sarafotoxin family.

It localises to the secreted. Endothelins are endothelium-derived vasoconstrictor peptides. This is Endothelin-3 (Edn3) from Rattus norvegicus (Rat).